A 519-amino-acid chain; its full sequence is 2-isopropylmalate synthase (519 aa).

A Pyruvate carboxyltransferase domain is found at 5–267 (VVIFDTTLRD…STNINYKEIY (263 aa)). 4 residues coordinate Mn(2+): Asp-14, His-202, His-204, and Asn-238. The regulatory domain stretch occupies residues 392-519 (SLKFFSVQSI…LKILKDFKKK (128 aa)).

This sequence belongs to the alpha-IPM synthase/homocitrate synthase family. LeuA type 1 subfamily. In terms of assembly, homodimer. The cofactor is Mn(2+).

Its subcellular location is the cytoplasm. It carries out the reaction 3-methyl-2-oxobutanoate + acetyl-CoA + H2O = (2S)-2-isopropylmalate + CoA + H(+). It participates in amino-acid biosynthesis; L-leucine biosynthesis; L-leucine from 3-methyl-2-oxobutanoate: step 1/4. Functionally, catalyzes the condensation of the acetyl group of acetyl-CoA with 3-methyl-2-oxobutanoate (2-ketoisovalerate) to form 3-carboxy-3-hydroxy-4-methylpentanoate (2-isopropylmalate). The chain is 2-isopropylmalate synthase from Buchnera aphidicola subsp. Acyrthosiphon pisum (strain APS) (Acyrthosiphon pisum symbiotic bacterium).